Here is a 225-residue protein sequence, read N- to C-terminus: Uracil-DNA glycosylase (225 aa).

The active-site Proton acceptor is Asp-65.

The protein belongs to the uracil-DNA glycosylase (UDG) superfamily. UNG family.

Its subcellular location is the cytoplasm. It carries out the reaction Hydrolyzes single-stranded DNA or mismatched double-stranded DNA and polynucleotides, releasing free uracil.. Excises uracil residues from the DNA which can arise as a result of misincorporation of dUMP residues by DNA polymerase or due to deamination of cytosine. The chain is Uracil-DNA glycosylase from Clostridium beijerinckii (strain ATCC 51743 / NCIMB 8052) (Clostridium acetobutylicum).